The chain runs to 245 residues: MSEKDLGGGKKAGFIARTWRGFWRWSARLLVAFLILSLVLVATVSVINPPTWAWRIDRALFPPKEDIQVRHQWVPLDKIAAHMQLAVIAAEDQRFTLHNGVDFAAIKTAIADRDPGEPLRGASTLTQQTAKNLFLWSSRSFVRKGLEAWFALLLDTLSGKRRTLELYLNIVEFGPGIYGVEAASRYYFNKGAGKLSTREAALLAALLPNPWSYRINPPTAYMNRRADWIARQMRQLGMATLKDLD.

Residues 29–49 (LLVAFLILSLVLVATVSVINP) traverse the membrane as a helical segment.

The protein belongs to the glycosyltransferase 51 family.

The protein localises to the cell inner membrane. It carries out the reaction [GlcNAc-(1-&gt;4)-Mur2Ac(oyl-L-Ala-gamma-D-Glu-L-Lys-D-Ala-D-Ala)](n)-di-trans,octa-cis-undecaprenyl diphosphate + beta-D-GlcNAc-(1-&gt;4)-Mur2Ac(oyl-L-Ala-gamma-D-Glu-L-Lys-D-Ala-D-Ala)-di-trans,octa-cis-undecaprenyl diphosphate = [GlcNAc-(1-&gt;4)-Mur2Ac(oyl-L-Ala-gamma-D-Glu-L-Lys-D-Ala-D-Ala)](n+1)-di-trans,octa-cis-undecaprenyl diphosphate + di-trans,octa-cis-undecaprenyl diphosphate + H(+). The protein operates within cell wall biogenesis; peptidoglycan biosynthesis. Peptidoglycan polymerase that catalyzes glycan chain elongation from lipid-linked precursors. The protein is Biosynthetic peptidoglycan transglycosylase of Shewanella amazonensis (strain ATCC BAA-1098 / SB2B).